Reading from the N-terminus, the 274-residue chain is Diaminopimelate epimerase (274 aa).

The substrate site is built by Asn-13, Gln-47, and Asn-65. Cys-74 (proton donor) is an active-site residue. Substrate-binding positions include 75 to 76 (GN), Asn-149, Asn-182, and 200 to 201 (ER). Cys-209 functions as the Proton acceptor in the catalytic mechanism. 210-211 (GT) is a binding site for substrate.

The protein belongs to the diaminopimelate epimerase family. In terms of assembly, homodimer.

The protein resides in the cytoplasm. The enzyme catalyses (2S,6S)-2,6-diaminopimelate = meso-2,6-diaminopimelate. It functions in the pathway amino-acid biosynthesis; L-lysine biosynthesis via DAP pathway; DL-2,6-diaminopimelate from LL-2,6-diaminopimelate: step 1/1. In terms of biological role, catalyzes the stereoinversion of LL-2,6-diaminopimelate (L,L-DAP) to meso-diaminopimelate (meso-DAP), a precursor of L-lysine and an essential component of the bacterial peptidoglycan. This is Diaminopimelate epimerase from Rhizorhabdus wittichii (strain DSM 6014 / CCUG 31198 / JCM 15750 / NBRC 105917 / EY 4224 / RW1) (Sphingomonas wittichii).